Consider the following 37-residue polypeptide: M-oxotoxin-Ot2d (37 aa).

Expressed by the venom gland.

Its subcellular location is the secreted. Its function is as follows. Disrupts biological membranes, particularly those rich in phosphocholine. Has antimicrobial activity against Gram-negative bacterium E.coli, Gram-positive bacteria B.subtilis and S.aureus, and hemolytic activity against sheep, pig and guinea pig red blood cells. Has insecticidal activity against S.frugiperda ovarian cells by opening non-selective ion channels. Enhances the insecticidal activity of spider venom neurotoxic peptides. The chain is M-oxotoxin-Ot2d from Oxyopes takobius (Lynx spider).